The following is a 491-amino-acid chain: Lysine--tRNA ligase (491 aa).

Mg(2+) contacts are provided by Glu-398 and Glu-405.

This sequence belongs to the class-II aminoacyl-tRNA synthetase family. As to quaternary structure, homodimer. Requires Mg(2+) as cofactor.

It is found in the cytoplasm. The enzyme catalyses tRNA(Lys) + L-lysine + ATP = L-lysyl-tRNA(Lys) + AMP + diphosphate. This is Lysine--tRNA ligase from Mycoplasmopsis synoviae (strain 53) (Mycoplasma synoviae).